Consider the following 138-residue polypeptide: Large ribosomal subunit protein uL16c (138 aa).

The tract at residues 1-21 is disordered; it reads MLSPQKTKFRKQHRGRMKGVS. Positions 7–21 are enriched in basic residues; sequence TKFRKQHRGRMKGVS.

The protein belongs to the universal ribosomal protein uL16 family. As to quaternary structure, part of the 50S ribosomal subunit.

The protein resides in the plastid. It localises to the chloroplast. The chain is Large ribosomal subunit protein uL16c from Cycas taitungensis (Prince sago).